Consider the following 179-residue polypeptide: Signal peptidase complex catalytic subunit SEC11A (179 aa).

Topologically, residues 1–16 (MLSLDFLDDVRRMNKR) are cytoplasmic. A helical; Signal-anchor for type II membrane protein transmembrane segment spans residues 17-36 (QLYYQVLNFGMIVSSALMIW). The Lumenal portion of the chain corresponds to 37 to 179 (KGLMLITGSE…LGLFVLVHRE (143 aa)). Residues Ser56, His96, and Asp122 each act as charge relay system in the active site. The tract at residues 165 to 176 (AVLFLLGLFVLV) is C-terminal short (CTS) helix.

The protein belongs to the peptidase S26B family. In terms of assembly, component of the signal peptidase complex paralog A (SPC-A) composed of a catalytic subunit SEC11A and three accessory subunits SPCS1, SPCS2 and SPCS3. Within the complex, interacts with SPCS2 and SPCS3. The complex induces a local thinning of the ER membrane which is used to measure the length of the signal peptide (SP) h-region of protein substrates. This ensures the selectivity of the complex towards h-regions shorter than 18-20 amino acids.

It localises to the endoplasmic reticulum membrane. It catalyses the reaction Cleavage of hydrophobic, N-terminal signal or leader sequences from secreted and periplasmic proteins.. Its function is as follows. Catalytic component of the signal peptidase complex (SPC) which catalyzes the cleavage of N-terminal signal sequences from nascent proteins as they are translocated into the lumen of the endoplasmic reticulum. Specifically cleaves N-terminal signal peptides that contain a hydrophobic alpha-helix (h-region) shorter than 18-20 amino acids. This Rattus norvegicus (Rat) protein is Signal peptidase complex catalytic subunit SEC11A (Sec11a).